Consider the following 201-residue polypeptide: dITP/XTP pyrophosphatase (201 aa).

Residue 8 to 13 (SNNPGK) participates in substrate binding. Residues E40 and D69 each contribute to the Mg(2+) site. The active-site Proton acceptor is D69. Residues S70, 155 to 158 (FGYD), K178, and 183 to 184 (HR) each bind substrate.

Belongs to the HAM1 NTPase family. Homodimer. Requires Mg(2+) as cofactor.

It carries out the reaction XTP + H2O = XMP + diphosphate + H(+). The catalysed reaction is dITP + H2O = dIMP + diphosphate + H(+). It catalyses the reaction ITP + H2O = IMP + diphosphate + H(+). Functionally, pyrophosphatase that catalyzes the hydrolysis of nucleoside triphosphates to their monophosphate derivatives, with a high preference for the non-canonical purine nucleotides XTP (xanthosine triphosphate), dITP (deoxyinosine triphosphate) and ITP. Seems to function as a house-cleaning enzyme that removes non-canonical purine nucleotides from the nucleotide pool, thus preventing their incorporation into DNA/RNA and avoiding chromosomal lesions. The polypeptide is dITP/XTP pyrophosphatase (Ralstonia nicotianae (strain ATCC BAA-1114 / GMI1000) (Ralstonia solanacearum)).